We begin with the raw amino-acid sequence, 590 residues long: Nuclear receptor subfamily 2 group C member 1 (590 aa).

The tract at residues 1–166 is required for interaction with KAT2B; the sequence is MATIEEIAHQ…RLQRCIAFGM (166 aa). Positions 98-173 form a DNA-binding region, nuclear receptor; that stretch reads FDLCVVCGDK…FGMKQDSVQC (76 aa). NR C4-type zinc fingers lie at residues 101-121 and 137-156; these read CVVCGDKASGRHYGAITCEGC and CRGSKDCVINKHHRNRCQYC. A phosphoserine mark is found at Ser185 and Ser203. Position 208 is a phosphothreonine (Thr208). A Phosphothreonine; by MAPK1 modification is found at Thr210. A Glycyl lysine isopeptide (Lys-Gly) (interchain with G-Cter in SUMO); alternate cross-link involves residue Lys238. Residue Lys238 forms a Glycyl lysine isopeptide (Lys-Gly) (interchain with G-Cter in SUMO2); alternate linkage. Residues 333–577 enclose the NR LBD domain; that stretch reads EGMEGSPHLI…SVIPHILKME (245 aa). A phosphoserine; by PKC mark is found at Ser461 and Ser568. The required for interaction with NRIP1 stretch occupies residues 571 to 590; that stretch reads PHILKMEPADYNSQIIGHSL. Residue Lys575 forms a Glycyl lysine isopeptide (Lys-Gly) (interchain with G-Cter in SUMO2) linkage.

The protein belongs to the nuclear hormone receptor family. NR2 subfamily. Homodimer. Heterodimer; with NR2C2 which is required for chromatin remodeling and for binding to promoter regions such as globin DR1 repeats. Interacts with ESR1; the interaction prevents homodimerization of ESR1 and suppresses its transcriptional activity and cell growth. Interacts with NRIP1 (via its LXXLL motifs); the interaction provides corepressor activity. Interacts with HDAC3 (via the DNA-binding domain); the interaction recruits phosphorylated NR2C1 to PML bodies for sumoylation. Interacts with HDAC4 (via the DNA-binding domain). Interacts with PIAS1; the interaction is required for sumoylation of NR2C1. Interacts with UBE2I; the interaction is required for sumoylation of NR2C1. Interacts with KAT2B; the interaction acts as a corepressor of gene expression. In terms of processing, sumoylation requires both PIAS1 and UBE2I. Sumoylation appears to dissociate NR2C1 from the PML nuclear bodies. Enhances the interaction with NRIP1 but inhibits interaction with KAT2B. In proliferating cells, stimulation by all-trans retinoic acid, activation of MAPK1-mediated phosphorylation and recruitment to PML bodies with subsequent sumoylation, suppresses OCT4 expression. Post-translationally, phosphorylated on several serine and threonine residues. Phosphorylation on Thr-210, stimulated by all-trans retinoic acid (atRA) mediates PML location and sumoylation in proliferating cells which then modulates its association with effector molecules, KAT2B and NRIP1. Phosphorylation on Ser-568 by PKC is important for protein stability and function as activator of RARB. Isoform 1 is highly expressed in the adlumenal compartment of the seminiferous tubule of adult testes (at protein level) and in the eyes of newborn animals. Weakly expressed in other adult organs including the seminal vesicle, prostate, ovary, adrenal gland, heart, thymus, placenta and brain. Expressed during embryonic stages in developing eyes, brain and cartilage primordia (at protein level). Also expressed in the developing spinal motor neurons and in the sympathetic-, parasympathetic- and sensory ganglia of the embryonic PNS. Expressed in the developing neural epithelia of the inner ear, nasal cavity, tongue and retina. At day 16.5, expressed in various tissues including kidney and intestine. In contrast, isoform 2 is widely expressed at a low level throughout the adult testis.

It localises to the nucleus. It is found in the PML body. In terms of biological role, orphan nuclear receptor. Binds the IR7 element in the promoter of its own gene in an autoregulatory negative feedback mechanism. Primarily repressor of a broad range of genes including ESR1 and RARB. Together with NR2C2, forms the core of the DRED (direct repeat erythroid-definitive) complex that represses embryonic and fetal globin transcription. Binds to hormone response elements (HREs) consisting of two 5'-AGGTCA-3' half site direct repeat consensus sequences. Also activator of OCT4 gene expression. Plays a fundamental role in early embryogenesis and regulates embryonic stem cell proliferation and differentiation. Mediator of retinoic acid-regulated preadipocyte proliferation. This chain is Nuclear receptor subfamily 2 group C member 1, found in Mus musculus (Mouse).